A 174-amino-acid polypeptide reads, in one-letter code: ATP synthase subunit delta (174 aa).

This sequence belongs to the ATPase delta chain family. F-type ATPases have 2 components, F(1) - the catalytic core - and F(0) - the membrane proton channel. F(1) has five subunits: alpha(3), beta(3), gamma(1), delta(1), epsilon(1). F(0) has three main subunits: a(1), b(2) and c(10-14). The alpha and beta chains form an alternating ring which encloses part of the gamma chain. F(1) is attached to F(0) by a central stalk formed by the gamma and epsilon chains, while a peripheral stalk is formed by the delta and b chains.

It is found in the cell inner membrane. Its function is as follows. F(1)F(0) ATP synthase produces ATP from ADP in the presence of a proton or sodium gradient. F-type ATPases consist of two structural domains, F(1) containing the extramembraneous catalytic core and F(0) containing the membrane proton channel, linked together by a central stalk and a peripheral stalk. During catalysis, ATP synthesis in the catalytic domain of F(1) is coupled via a rotary mechanism of the central stalk subunits to proton translocation. This protein is part of the stalk that links CF(0) to CF(1). It either transmits conformational changes from CF(0) to CF(1) or is implicated in proton conduction. This Helicobacter hepaticus (strain ATCC 51449 / 3B1) protein is ATP synthase subunit delta.